The sequence spans 202 residues: Snake venom metalloproteinase TM-1 (202 aa).

Glutamine 1 is modified (pyrrolidone carboxylic acid). Positions 7-202 (RYVMLAIVAD…TNPQCILNAP (196 aa)) constitute a Peptidase M12B domain. 3 cysteine pairs are disulfide-bonded: cysteine 118/cysteine 197, cysteine 159/cysteine 181, and cysteine 161/cysteine 164. Histidine 143 is a binding site for Zn(2+). Glutamate 144 is a catalytic residue. Zn(2+)-binding residues include histidine 147 and histidine 153.

It belongs to the venom metalloproteinase (M12B) family. P-I subfamily. Monomer. Zn(2+) is required as a cofactor. Post-translationally, the N-terminus is blocked. Not glycosylated. Expressed by the venom gland.

It is found in the secreted. With respect to regulation, inhibited by EDTA and 1,10-phenanthroline. Is also inhibited by endogenous tripeptide inhibitors pyroGlu-Asn-Trp, pyroGlu-Gln-Trp, and pyroGlu-Lys-Trp. Potent fibrinogenolytic protease which cleaves mainly the Aalpha (FGA) and Bbeta (FGB) chains of fibrinogen and slightly the gamma chain (FGG). Shows preference for substrates having a moderate-size and hydrophobic residue at the P1' position. Preferentially cleaves Ala-|-Leu and Tyr-|-Leu bonds. Is more susceptible to tripeptide inhibitors than TM-3 (AC O57413). This is Snake venom metalloproteinase TM-1 from Protobothrops mucrosquamatus (Taiwan habu).